A 490-amino-acid polypeptide reads, in one-letter code: Membrane-bound lytic murein transglycosylase F (490 aa).

The signal sequence occupies residues 1–32; it reads MFALTAYRLRCAAWLLATGIFLLLAGCSEAKA. Residues 33 to 269 are non-LT domain; it reads PTALERVQKE…RLKDRYYGHV (237 aa). The tract at residues 270–490 is LT domain; sequence DVLGYVGAYT…PEEDSGDEKL (221 aa). E316 is an active-site residue. The disordered stretch occupies residues 467–490; sequence AESGLHLPGVNKTRPEEDSGDEKL. The segment covering 479 to 490 has biased composition (basic and acidic residues); it reads TRPEEDSGDEKL.

The protein in the N-terminal section; belongs to the bacterial solute-binding protein 3 family. In the C-terminal section; belongs to the transglycosylase Slt family.

It is found in the cell outer membrane. The catalysed reaction is Exolytic cleavage of the (1-&gt;4)-beta-glycosidic linkage between N-acetylmuramic acid (MurNAc) and N-acetylglucosamine (GlcNAc) residues in peptidoglycan, from either the reducing or the non-reducing ends of the peptidoglycan chains, with concomitant formation of a 1,6-anhydrobond in the MurNAc residue.. Murein-degrading enzyme that degrades murein glycan strands and insoluble, high-molecular weight murein sacculi, with the concomitant formation of a 1,6-anhydromuramoyl product. Lytic transglycosylases (LTs) play an integral role in the metabolism of the peptidoglycan (PG) sacculus. Their lytic action creates space within the PG sacculus to allow for its expansion as well as for the insertion of various structures such as secretion systems and flagella. The chain is Membrane-bound lytic murein transglycosylase F from Pseudomonas aeruginosa (strain ATCC 15692 / DSM 22644 / CIP 104116 / JCM 14847 / LMG 12228 / 1C / PRS 101 / PAO1).